Consider the following 288-residue polypeptide: MKKIKKAIIPAAGLGTRFLPATKAMPKEMLPILDKPTIQYIVEEAARAGIEDIIIVTGRHKRAIEDHFDSQKELEMVLKEKGKSELLEKVQYSTELANIFYVRQKEQKGLGHAISSARQFIGNEPFAVLLGDDIVESEVPAVKQLIDVYEETGHSVIGVQEVPEADTHRYGIIDPLTKNGRQYEVKKFVEKPAQGTAPSNLAIMGRYVLTPEIFDYLKTQKEGAGNEIQLTDAIERMNNDNQVYAYDFEGERYDVGEKLGFVKTTIEYALKDDSMREELTRFIKELGL.

Belongs to the UDPGP type 2 family.

The catalysed reaction is alpha-D-glucose 1-phosphate + UTP + H(+) = UDP-alpha-D-glucose + diphosphate. Its pathway is glycolipid metabolism; diglucosyl-diacylglycerol biosynthesis. In terms of biological role, catalyzes the formation of UDP-glucose from glucose-1-phosphate and UTP. This is an intermediate step in the biosynthesis of diglucosyl-diacylglycerol (Glc2-DAG), i.e. the predominant glycolipid found in the S.aureus membrane, which is also used as a membrane anchor for lipoteichoic acid (LTA). The polypeptide is UTP--glucose-1-phosphate uridylyltransferase (gtaB) (Staphylococcus aureus (strain MSSA476)).